A 420-amino-acid chain; its full sequence is Probable pectate lyase C (420 aa).

An N-terminal signal peptide occupies residues 1–20; the sequence is MKLSAPLLVSLAAFSQAVTA. Residues asparagine 49, asparagine 165, and asparagine 202 are each glycosylated (N-linked (GlcNAc...) asparagine). The active site involves arginine 205. Positions 262-297 constitute an EF-hand domain; sequence NANFHGYVQNNYYDPDKDGQLDGFELGVSSSNYGGV. The Ca(2+) site is built by aspartate 275, aspartate 277, aspartate 279, glutamine 281, and glutamate 286. The tract at residues 358–396 is disordered; the sequence is TMGGPGTLNGGTPAKDTDGDGIPDEAEKQLGTDPNTNDS. N-linked (GlcNAc...) asparagine glycosylation occurs at asparagine 394.

This sequence belongs to the polysaccharide lyase 1 family. The cofactor is Ca(2+).

It is found in the secreted. The catalysed reaction is Eliminative cleavage of (1-&gt;4)-alpha-D-galacturonan to give oligosaccharides with 4-deoxy-alpha-D-galact-4-enuronosyl groups at their non-reducing ends.. Its function is as follows. Pectinolytic enzyme consist of four classes of enzymes: pectin lyase, polygalacturonase, pectin methylesterase and rhamnogalacturonase. Among pectinolytic enzymes, pectin lyase is the most important in depolymerization of pectin, since it cleaves internal glycosidic bonds of highly methylated pectins. Favors pectate, the anion, over pectin, the methyl ester. The chain is Probable pectate lyase C (plyC) from Aspergillus fumigatus (strain CBS 144.89 / FGSC A1163 / CEA10) (Neosartorya fumigata).